Consider the following 117-residue polypeptide: Fluoride-specific ion channel FluC 2 (117 aa).

The next 4 membrane-spanning stretches (helical) occupy residues 1-21, 33-53, 60-80, and 95-115; these read MISI…RSAI, LPIA…LTIG, WFPA…STLA, and LFLN…YIGY. The Na(+) site is built by Gly-71 and Thr-74.

The protein belongs to the fluoride channel Fluc/FEX (TC 1.A.43) family.

It localises to the cell membrane. The catalysed reaction is fluoride(in) = fluoride(out). Its activity is regulated as follows. Na(+) is not transported, but it plays an essential structural role and its presence is essential for fluoride channel function. Functionally, fluoride-specific ion channel. Important for reducing fluoride concentration in the cell, thus reducing its toxicity. The protein is Fluoride-specific ion channel FluC 2 of Staphylococcus aureus (strain COL).